A 352-amino-acid chain; its full sequence is Rhodopsin (352 aa).

Residues 1-36 are Extracellular-facing; that stretch reads MNGTEGPFFYIPMVNTTGVVRSPYEYPQYYLVNPAA. N2 and N15 each carry an N-linked (GlcNAc...) asparagine glycan. The helical transmembrane segment at 37–61 threads the bilayer; that stretch reads YACLGAYMFFLILVGFPVNFLTLYV. At 62-73 the chain is on the cytoplasmic side; that stretch reads TLEHKKLRTPLN. The chain crosses the membrane as a helical span at residues 74-96; sequence YILLNLAVADLFMVFGGFTTTIY. The Extracellular segment spans residues 97–110; the sequence is TSMHGYFVLGRLGC. C110 and C187 are disulfide-bonded. The chain crosses the membrane as a helical span at residues 111-133; it reads NIEGFFATLGGEIALWSLVVLAI. Positions 134-136 match the 'Ionic lock' involved in activated form stabilization motif; that stretch reads ERW. The Cytoplasmic segment spans residues 134-152; that stretch reads ERWVVVCKPISNFRFGENH. The helical transmembrane segment at 153-173 threads the bilayer; sequence AIMGVAFTWFMASACAVPPLV. The Extracellular segment spans residues 174 to 202; sequence GWSRYIPEGMQCSCGIDYYTRAEGFNNES. N200 carries an N-linked (GlcNAc...) asparagine glycan. A helical membrane pass occupies residues 203–224; the sequence is FVIYMFTVHFCIPLAVVGFCYG. Topologically, residues 225–252 are cytoplasmic; that stretch reads RLLCAVKEAAAAQQESETTQRAEREVSR. Residues 253–274 form a helical membrane-spanning segment; sequence MVVIMVIGFLVCWLPYASVAWY. Topologically, residues 275-286 are extracellular; the sequence is IFTHQGSEFGPL. The helical transmembrane segment at 287–308 threads the bilayer; it reads FMTIPAFFAKSSSIYNPMIYIC. Residue K296 is modified to N6-(retinylidene)lysine. Topologically, residues 309-352 are cytoplasmic; it reads MNKQFRHCMITTLCCGKNPFEEEEGASTTKTEASSVSSSSVSPA. S-palmitoyl cysteine attachment occurs at residues C322 and C323. The disordered stretch occupies residues 331 to 352; that stretch reads EEGASTTKTEASSVSSSSVSPA. Low complexity predominate over residues 342–352; sequence SSVSSSSVSPA.

This sequence belongs to the G-protein coupled receptor 1 family. Opsin subfamily. In terms of processing, phosphorylated on some or all of the serine and threonine residues present in the C-terminal region. Contains one covalently linked retinal chromophore.

It is found in the membrane. The protein resides in the cell projection. The protein localises to the cilium. Its subcellular location is the photoreceptor outer segment. Photoreceptor required for image-forming vision at low light intensity. While most salt water fish species use retinal as chromophore, most freshwater fish use 3-dehydroretinal, or a mixture of retinal and 3-dehydroretinal. Light-induced isomerization of 11-cis to all-trans retinal triggers a conformational change that activates signaling via G-proteins. Subsequent receptor phosphorylation mediates displacement of the bound G-protein alpha subunit by arrestin and terminates signaling. In Gobius niger (Black goby), this protein is Rhodopsin (rho).